Reading from the N-terminus, the 461-residue chain is Elongation factor 1-alpha, oocyte form (461 aa).

A N,N,N-trimethylglycine modification is found at G2. The tr-type G domain maps to 5–242; that stretch reads KIHINIVVIG…DCIIPPQRPT (238 aa). Positions 14–21 are G1; it reads GHVDSGKS. GTP is bound at residue 14–21; sequence GHVDSGKS. A G2 region spans residues 70–74; that stretch reads GITID. The interval 91 to 94 is G3; sequence DAPG. Residues 91–95 and 153–156 contribute to the GTP site; these read DAPGH and NKMD. The interval 153-156 is G4; sequence NKMD. The segment at 194 to 196 is G5; that stretch reads SGW. E301 and E374 each carry 5-glutamyl glycerylphosphorylethanolamine.

Belongs to the TRAFAC class translation factor GTPase superfamily. Classic translation factor GTPase family. EF-Tu/EF-1A subfamily. As to expression, oocyte.

It is found in the cytoplasm. This protein promotes the GTP-dependent binding of aminoacyl-tRNA to the A-site of ribosomes during protein biosynthesis. The chain is Elongation factor 1-alpha, oocyte form (eef1ao) from Xenopus laevis (African clawed frog).